The sequence spans 388 residues: UDP-N-acetylglucosamine--N-acetylmuramyl-(pentapeptide) pyrophosphoryl-undecaprenol N-acetylglucosamine transferase (388 aa).

UDP-N-acetyl-alpha-D-glucosamine-binding positions include 42-44 (TGG), Asn-159, Arg-195, Ser-223, Ile-277, and Gln-322.

This sequence belongs to the glycosyltransferase 28 family. MurG subfamily.

It is found in the cell inner membrane. The enzyme catalyses di-trans,octa-cis-undecaprenyl diphospho-N-acetyl-alpha-D-muramoyl-L-alanyl-D-glutamyl-meso-2,6-diaminopimeloyl-D-alanyl-D-alanine + UDP-N-acetyl-alpha-D-glucosamine = di-trans,octa-cis-undecaprenyl diphospho-[N-acetyl-alpha-D-glucosaminyl-(1-&gt;4)]-N-acetyl-alpha-D-muramoyl-L-alanyl-D-glutamyl-meso-2,6-diaminopimeloyl-D-alanyl-D-alanine + UDP + H(+). It participates in cell wall biogenesis; peptidoglycan biosynthesis. In terms of biological role, cell wall formation. Catalyzes the transfer of a GlcNAc subunit on undecaprenyl-pyrophosphoryl-MurNAc-pentapeptide (lipid intermediate I) to form undecaprenyl-pyrophosphoryl-MurNAc-(pentapeptide)GlcNAc (lipid intermediate II). In Albidiferax ferrireducens (strain ATCC BAA-621 / DSM 15236 / T118) (Rhodoferax ferrireducens), this protein is UDP-N-acetylglucosamine--N-acetylmuramyl-(pentapeptide) pyrophosphoryl-undecaprenol N-acetylglucosamine transferase.